Reading from the N-terminus, the 162-residue chain is Sorting nexin-12 (162 aa).

Residues methionine 1–threonine 20 are disordered. Serine 2 carries the N-acetylserine modification. Tyrosine 23 bears the Phosphotyrosine mark. In terms of domain architecture, PX spans asparagine 28–aspartate 152. Residues arginine 71, serine 73, lysine 96, and arginine 119 each coordinate a 1,2-diacyl-sn-glycero-3-phospho-(1D-myo-inositol-3-phosphate). Serine 73 is subject to Phosphoserine.

This sequence belongs to the sorting nexin family.

The protein localises to the membrane. Functionally, may be involved in several stages of intracellular trafficking. The polypeptide is Sorting nexin-12 (SNX12) (Homo sapiens (Human)).